A 426-amino-acid chain; its full sequence is Neuromedin-U receptor 1 (426 aa).

The Extracellular portion of the chain corresponds to 1-65; the sequence is MTPLCLNCSV…QTELFMPICA (65 aa). 3 N-linked (GlcNAc...) asparagine glycosylation sites follow: N7, N27, and N41. Residues 66–86 form a helical membrane-spanning segment; the sequence is TYLLIFVVGAVGNGLTCLVIL. Residues 87–97 are Cytoplasmic-facing; sequence RHKAMRTPTNY. A helical transmembrane segment spans residues 98–118; that stretch reads YLFSLAVSDLLVLLVGLPLEL. At 119–138 the chain is on the extracellular side; sequence YEMWHNYPFLLGVGGCYFRT. C134 and C219 are oxidised to a cystine. Residues 139-161 form a helical membrane-spanning segment; it reads LLFEMVCLASVLNVTALSVERYV. Residues 162–181 are Cytoplasmic-facing; sequence AVVHPLQARSMVTRAHVRRV. A helical transmembrane segment spans residues 182–202; sequence LGAVWGLAMLCSLPNTSLHGI. The Extracellular portion of the chain corresponds to 203–235; sequence RQLHVPCRGPVPDSAVCMLVRPRALYNMVVQTT. A helical membrane pass occupies residues 236–256; sequence ALLFFCLPMAIMSVLYLLIGL. The Cytoplasmic portion of the chain corresponds to 257–294; sequence RLRRERLLLMQEAKGRGSAAARSRYTCRLQQHDRGRRQ. The chain crosses the membrane as a helical span at residues 295–315; it reads VTKMLFVLVVVFGICWAPFHA. The Extracellular segment spans residues 316–338; the sequence is DRVMWSVVSQWTDGLHLAFQHVH. Residues 339 to 359 form a helical membrane-spanning segment; the sequence is VISGIFFYLGSAANPVLYSLM. Over 360–426 the chain is Cytoplasmic; it reads SSRFRETFQE…PEAQQETDPS (67 aa).

This sequence belongs to the G-protein coupled receptor 1 family. In terms of tissue distribution, expressed in greatest abundance in peripheral organs, particularly in elements of the gastrointestinal and urogenital systems with highest levels in testes. In central nervous system structures express levels are much lower than those seen in peripheral organs. Within the CNS, has been detected in highest abundance in the cerebellum, dorsal root ganglia, hippocampus, and spinal cord.

Its subcellular location is the cell membrane. Its function is as follows. Receptor for the neuromedin-U and neuromedin-S neuropeptides. In Homo sapiens (Human), this protein is Neuromedin-U receptor 1 (NMUR1).